A 263-amino-acid chain; its full sequence is Palmitoyltransferase ZDHHC22 (263 aa).

At 1 to 9 (MLALRLLNV) the chain is on the cytoplasmic side. The chain crosses the membrane as a helical span at residues 10–30 (VAPAYFLCISLVTFVLQLFLF). The Lumenal portion of the chain corresponds to 31–48 (LPSMREDPTATPLFSPAV). The helical transmembrane segment at 49–69 (LHGALFLFLSANALGNYVLVI) threads the bilayer. The Cytoplasmic portion of the chain corresponds to 70-125 (QNSPDDLGTCQGTMSQRPQCPPPSTHFCRVCSRVTLRHDHHCFFTGNCIGSRNMRN). The region spanning 91–131 (PPSTHFCRVCSRVTLRHDHHCFFTGNCIGSRNMRNFILFCL) is the DHHC domain. The active-site S-palmitoyl cysteine intermediate is C111. 2 helical membrane passes run 126-146 (FILF…AGVA) and 147-167 (YISA…TLLP). Over 168–182 (TSISQFFSGAVLGSD) the chain is Cytoplasmic. A helical membrane pass occupies residues 183–203 (MFVILMLYLWFAVGLACAGFC). The Lumenal segment spans residues 204–263 (CHQLLLILRGQTRYQVRKGMAVRARPWRKNLQEVFGKRWLLGLLVPMFNVGTESSKQQDK).

The protein belongs to the DHHC palmitoyltransferase family. As to quaternary structure, interacts with CNN3.

The protein localises to the endoplasmic reticulum membrane. It localises to the golgi apparatus membrane. The catalysed reaction is L-cysteinyl-[protein] + hexadecanoyl-CoA = S-hexadecanoyl-L-cysteinyl-[protein] + CoA. In terms of biological role, palmitoyltransferase that could catalyze the addition of palmitate onto various protein substrates and be involved in a variety of cellular processes. Catalyzes the palmitoylation of KCNMA1, regulating localization of KCNMA1 to the plasma membrane. Might also mediate palmitoylation of CNN3. The sequence is that of Palmitoyltransferase ZDHHC22 from Mus musculus (Mouse).